A 932-amino-acid polypeptide reads, in one-letter code: Protein translocase subunit SecA (932 aa).

Residues glutamine 86, 104 to 108 (GEGKT), and aspartate 494 contribute to the ATP site. A disordered region spans residues 857-932 (EDAGAEAHAS…KPAPKRKKRR (76 aa)). The segment covering 905-915 (TAGSAGDSNLP) has biased composition (polar residues). Over residues 920-932 (KTNKPAPKRKKRR) the composition is skewed to basic residues.

It belongs to the SecA family. Monomer and homodimer. Part of the essential Sec protein translocation apparatus which comprises SecA, SecYEG and auxiliary proteins SecDF. Other proteins may also be involved.

The protein resides in the cell membrane. Its subcellular location is the cytoplasm. It catalyses the reaction ATP + H2O + cellular proteinSide 1 = ADP + phosphate + cellular proteinSide 2.. Part of the Sec protein translocase complex. Interacts with the SecYEG preprotein conducting channel. Has a central role in coupling the hydrolysis of ATP to the transfer of proteins into and across the cell membrane, serving as an ATP-driven molecular motor driving the stepwise translocation of polypeptide chains across the membrane. The polypeptide is Protein translocase subunit SecA (Renibacterium salmoninarum (strain ATCC 33209 / DSM 20767 / JCM 11484 / NBRC 15589 / NCIMB 2235)).